We begin with the raw amino-acid sequence, 188 residues long: Adenine phosphoribosyltransferase (188 aa).

The protein belongs to the purine/pyrimidine phosphoribosyltransferase family. As to quaternary structure, homodimer.

The protein localises to the cytoplasm. It catalyses the reaction AMP + diphosphate = 5-phospho-alpha-D-ribose 1-diphosphate + adenine. Its pathway is purine metabolism; AMP biosynthesis via salvage pathway; AMP from adenine: step 1/1. Catalyzes a salvage reaction resulting in the formation of AMP, that is energically less costly than de novo synthesis. In Salinispora tropica (strain ATCC BAA-916 / DSM 44818 / JCM 13857 / NBRC 105044 / CNB-440), this protein is Adenine phosphoribosyltransferase.